The primary structure comprises 352 residues: Biotin synthase (352 aa).

Positions 44 to 262 (NRVQVSTLLS…LAVARIMMPK (219 aa)) constitute a Radical SAM core domain. [4Fe-4S] cluster-binding residues include cysteine 59, cysteine 63, and cysteine 66. 4 residues coordinate [2Fe-2S] cluster: cysteine 103, cysteine 134, cysteine 194, and arginine 266.

The protein belongs to the radical SAM superfamily. Biotin synthase family. Homodimer. [4Fe-4S] cluster serves as cofactor. [2Fe-2S] cluster is required as a cofactor.

The enzyme catalyses (4R,5S)-dethiobiotin + (sulfur carrier)-SH + 2 reduced [2Fe-2S]-[ferredoxin] + 2 S-adenosyl-L-methionine = (sulfur carrier)-H + biotin + 2 5'-deoxyadenosine + 2 L-methionine + 2 oxidized [2Fe-2S]-[ferredoxin]. Its pathway is cofactor biosynthesis; biotin biosynthesis; biotin from 7,8-diaminononanoate: step 2/2. Functionally, catalyzes the conversion of dethiobiotin (DTB) to biotin by the insertion of a sulfur atom into dethiobiotin via a radical-based mechanism. The polypeptide is Biotin synthase (Pseudomonas aeruginosa (strain UCBPP-PA14)).